The sequence spans 443 residues: Glutamyl-tRNA reductase (443 aa).

Residues 49–52, Ser109, 114–116, and Gln120 each bind substrate; these read TCNR and ETQ. Cys50 (nucleophile) is an active-site residue. 189-194 is an NADP(+) binding site; the sequence is GAGDMS.

The protein belongs to the glutamyl-tRNA reductase family. Homodimer.

It carries out the reaction (S)-4-amino-5-oxopentanoate + tRNA(Glu) + NADP(+) = L-glutamyl-tRNA(Glu) + NADPH + H(+). The protein operates within porphyrin-containing compound metabolism; protoporphyrin-IX biosynthesis; 5-aminolevulinate from L-glutamyl-tRNA(Glu): step 1/2. Its function is as follows. Catalyzes the NADPH-dependent reduction of glutamyl-tRNA(Glu) to glutamate 1-semialdehyde (GSA). This Staphylococcus saprophyticus subsp. saprophyticus (strain ATCC 15305 / DSM 20229 / NCIMB 8711 / NCTC 7292 / S-41) protein is Glutamyl-tRNA reductase.